The primary structure comprises 372 residues: MAYHSFLVEPISCHAWNKDRTQIAICPNNHEVHIYEKSGAKWTKVHELKEHNGQVTGIDWAPESNRIVTCGTDRNAYVWTLKGRTWKPTLVILRINRAARCVRWAPNENKFAVGSGSRVISICYFEQENDWWVCKHIKKPIRSTVLSLDWHPNNVLLAAGSCDFKCRIFSAYIKEVEERPAPTPWGSKMPFGELMFESSSSCGWVHGVCFSASGSRVAWVSHDSTVCLADADKKMAVATLASETLPLLALTFITDNSLVAAGHDCFPVLFTYDAAAGMLSFGGRLDVPKQSSQRGLTARERFQNLDKKASSEGGTAAGAGLDSLHKNSVSQISVLSGGKAKCSQFCTTGMDGGMSIWDVKSLESALKDLKIK.

WD repeat units follow at residues 6–45 (FLVE…WTKV), 50–89 (EHNG…WKPT), 94–135 (RINR…WVCK), 140–179 (PIRS…VEER), 242–280 (SETL…GMLS), and 324–367 (LHKN…SALK).

It belongs to the WD repeat ARPC1 family. In terms of assembly, component of the Arp2/3 complex composed of ACTR2/ARP2, ACTR3/ARP3, ARPC1B/p41-ARC, ARPC2/p34-ARC, ARPC3/p21-ARC, ARPC4/p20-ARC and ARPC5/p16-ARC.

The protein resides in the cytoplasm. It is found in the cytoskeleton. Its subcellular location is the nucleus. Component of the Arp2/3 complex, a multiprotein complex that mediates actin polymerization upon stimulation by nucleation-promoting factor (NPF). The Arp2/3 complex mediates the formation of branched actin networks in the cytoplasm, providing the force for cell motility. In addition to its role in the cytoplasmic cytoskeleton, the Arp2/3 complex also promotes actin polymerization in the nucleus, thereby regulating gene transcription and repair of damaged DNA. The Arp2/3 complex promotes homologous recombination (HR) repair in response to DNA damage by promoting nuclear actin polymerization, leading to drive motility of double-strand breaks (DSBs). The protein is Actin-related protein 2/3 complex subunit 1B of Homo sapiens (Human).